Here is a 268-residue protein sequence, read N- to C-terminus: MYKDIKVDPAQLEAALDARLKIRAGFDKPTAGMAAGMTQVNMISVPRDWAYDFLLYAHRNPQSCPVLDVLEEGIYATKLAADSDIRTDFPRYRIWKDGEMVDEVTDAREIYNAHPDLVTFLIGCSFSFETALQEAGIEVRHIHDDTNVPMYLSNIKCEPAGRISGNMVVSMRPIPSHQISEAVKITARMPSVHGAPVHIGHPESLGIKDVNKPDFGDASRIEAGEIPVFWACGVTPQAAVINSKIPFAISHAPGYMFITDIPDRAWMG.

The protein belongs to the D-glutamate cyclase family.

This is Putative hydro-lyase ABSDF2257 from Acinetobacter baumannii (strain SDF).